The chain runs to 496 residues: Mothers against decapentaplegic homolog 6 (496 aa).

The segment covering Met1 to Arg15 has biased composition (basic residues). 2 disordered regions span residues Met1–Leu116 and Gly136–Gly156. Residues Arg75 and Arg82 each carry the dimethylated arginine; alternate modification. Omega-N-methylarginine; alternate is present on residues Arg75 and Arg82. The MH1 domain occupies Ala148–Pro275. Lys173 participates in a covalent cross-link: Glycyl lysine isopeptide (Lys-Gly) (interchain with G-Cter in ubiquitin). Positions 205, 247, 260, and 265 each coordinate Zn(2+). Positions Trp331–Arg496 constitute an MH2 domain. Ser435 is modified (phosphoserine; by PRKX; in vitro).

This sequence belongs to the dwarfin/SMAD family. Interacts with NEDD4L. Interacts with WWP1. Interacts with STAMBP and PRKX. Interacts with RNF111 and AXIN1. Interacts with TGF-beta type I receptor superfamily members, including ACVR1B, BMPR1B and TGFBR1. In response to BMP2, but not to TGFB treatment, interacts with SMAD1, but not with SMAD2, nor with SMAD4; this interaction may inhibit SMAD1 binding to SMAD4. Interacts with HOXC8 and HOXC9. Interacts with PELI1; this interaction interferes with PELI1 complex formation with TRAF6, IRAK1, IRAK4 and MYD88 in response to IL1B and hence negatively regulates IL1R-TLR signaling. Interacts with TSC22D1/TSC-22. In terms of processing, phosphorylated by BMP type 1 receptor kinase and by PRKX. Post-translationally, monoubiquitinated at Lys-173 by the E2/E3 hybrid ubiquitin-protein ligase UBE2O, leading to reduced binding affinity for the activated BMP type I receptor ACVR1/ALK2, thereby enhancing BMP7 and regulating adipocyte differentiation. Ubiquitinated by WWP1. Ubiquitinated by ARK2C, promoting proteasomal degradation, leading to enhance the BMP-Smad signaling. Arginine methylation by PRMT1, which is recruited by BMPR2, initiates BMP-Induced signaling and induces dissociation from the BMPR1B receptor at the cell surface leading to derepress downstream Smad1/Smad5 signaling. In terms of tissue distribution, expressed in the brain, heart, ovary, peripheral blood leukocytes, small intestine, spleen, thymus, bone marrow, fetal liver and lymph nodes.

The protein localises to the nucleus. Transforming growth factor-beta superfamily receptors signaling occurs through the Smad family of intracellular mediators. SMAD6 is an inhibitory Smad (i-Smad) that negatively regulates signaling downstream of type I transforming growth factor-beta. Acts as a mediator of TGF-beta and BMP anti-inflammatory activities. Suppresses IL1R-TLR signaling through its direct interaction with PEL1, preventing NF-kappa-B activation, nuclear transport and NF-kappa-B-mediated expression of pro-inflammatory genes. Blocks the BMP-SMAD1 signaling pathway by competing with SMAD4 for receptor-activated SMAD1-binding. Binds to regulatory elements in target promoter regions. The sequence is that of Mothers against decapentaplegic homolog 6 (SMAD6) from Homo sapiens (Human).